The sequence spans 322 residues: GDSL esterase/lipase At5g03600 (322 aa).

Residue Ser21 is the Nucleophile of the active site. Active-site residues include Asp295 and His298.

Belongs to the 'GDSL' lipolytic enzyme family.

The protein is GDSL esterase/lipase At5g03600 of Arabidopsis thaliana (Mouse-ear cress).